A 314-amino-acid polypeptide reads, in one-letter code: MSGDRLEFENPIEDAVSRLRFSPQSNNLLVASWDSYLRLYDVESSSLSLELNSQAALLDCCFENESTSFTSGSDGFIRRYDLNAGTVDTIGRHDDISTSIVYSYEKGEVISTGFDEKIKFWDTRQRESLVFSTDAGGAVGCVTVSGNNLVVCVDASMHIYDLRNLDEAFQSYASQVEVPIRCITSVPYSRGYAVGSVDGRVAVDFPNTSCSSEIKYSFRCHPKSRNGRLDGVCINAIEFSPCGSGTFVTGDNEGYVISWNAKSRRRLNELPRYSNSIASLAFDHTGELLAIASSHTYQDAKEKEEAPQVFIHRL.

WD repeat units lie at residues 11–50, 52–90, 92–131, 134–173, 176–215, 229–269, and 272–311; these read PIED…LSLE, NSQA…VDTI, RHDD…SLVF, DAGG…QSYA, VEVP…SEIK, LDGV…RLNE, and RYSN…QVFI.

The protein belongs to the WD repeat BUB3 family. As to quaternary structure, part of the mitotic checkpoint complex (MCC).

It localises to the nucleus. The protein resides in the chromosome. It is found in the centromere. Its subcellular location is the kinetochore. The protein localises to the cytoplasm. It localises to the cytoskeleton. The protein resides in the phragmoplast. It is found in the spindle. In terms of biological role, has a dual function in spindle-assembly checkpoint signaling and in promoting the establishment of correct kinetochore-microtubule (K-MT) attachments. Promotes the formation of stable end-on bipolar attachments. Necessary for kinetochore localization of BUB1. The BUB1/BUB3 complex plays a role in the inhibition of anaphase-promoting complex or cyclosome (APC/C) when spindle-assembly checkpoint is activated and inhibits the ubiquitin ligase activity of APC/C by phosphorylating its activator CDC20. This chain is Mitotic checkpoint protein BUB3.3 (BUB3.3), found in Arabidopsis thaliana (Mouse-ear cress).